The chain runs to 269 residues: Putative pyridoxine kinase (269 aa).

Asn-139 is an ATP binding site. Residue Glu-142 participates in Mg(2+) binding. Residues 176-180 (KGGGR), Asp-189, Val-205, Gly-214, and Lys-239 contribute to the ATP site.

It belongs to the ThiD family.

The catalysed reaction is pyridoxal + ATP = pyridoxal 5'-phosphate + ADP + H(+). Functionally, phosphorylates B6 vitamers; functions in a salvage pathway. Uses pyridoxal, pyridoxine, and pyridoxamine as substrates. The polypeptide is Putative pyridoxine kinase (pdxK) (Treponema pallidum (strain Nichols)).